The sequence spans 477 residues: Transposase for insertion sequence element IS231F (477 aa).

This sequence belongs to the transposase 11 family.

Involved in the transposition of the insertion sequence. This is Transposase for insertion sequence element IS231F from Bacillus thuringiensis subsp. israelensis.